Consider the following 119-residue polypeptide: Large ribosomal subunit protein bL19 (119 aa).

The protein belongs to the bacterial ribosomal protein bL19 family.

Its function is as follows. This protein is located at the 30S-50S ribosomal subunit interface and may play a role in the structure and function of the aminoacyl-tRNA binding site. The polypeptide is Large ribosomal subunit protein bL19 (Saccharopolyspora erythraea (strain ATCC 11635 / DSM 40517 / JCM 4748 / NBRC 13426 / NCIMB 8594 / NRRL 2338)).